The sequence spans 75 residues: Protein RegB (75 aa).

Its function is as follows. Required for optimal exotoxin A production. This Pseudomonas aeruginosa (strain ATCC 15692 / DSM 22644 / CIP 104116 / JCM 14847 / LMG 12228 / 1C / PRS 101 / PAO1) protein is Protein RegB (regB).